The chain runs to 486 residues: Betaine aldehyde dehydrogenase (486 aa).

The K(+) site is built by Thr-23 and Asp-90. 147–149 (GAW) contributes to the NAD(+) binding site. The active-site Charge relay system is Lys-159. Residues 173–176 (KPSE) and 226–229 (ESGT) contribute to the NAD(+) site. Leu-241 is a K(+) binding site. The Proton acceptor role is filled by Glu-247. NAD(+)-binding residues include Gly-249, Cys-281, and Glu-382. The Nucleophile role is filled by Cys-281. Position 281 is a cysteine sulfenic acid (-SOH) (Cys-281). K(+) is bound by residues Lys-452 and Gly-455. Glu-459 serves as the catalytic Charge relay system.

Belongs to the aldehyde dehydrogenase family. As to quaternary structure, dimer of dimers. K(+) is required as a cofactor.

The enzyme catalyses betaine aldehyde + NAD(+) + H2O = glycine betaine + NADH + 2 H(+). The protein operates within amine and polyamine biosynthesis; betaine biosynthesis via choline pathway; betaine from betaine aldehyde: step 1/1. In terms of biological role, involved in the biosynthesis of the osmoprotectant glycine betaine. Catalyzes the irreversible oxidation of betaine aldehyde to the corresponding acid. The chain is Betaine aldehyde dehydrogenase from Vibrio vulnificus (strain CMCP6).